The chain runs to 480 residues: Adenosylhomocysteinase (480 aa).

The substrate site is built by Thr63, Asp142, and Glu203. NAD(+) is bound at residue 204 to 206; it reads TTT. Positions 233 and 237 each coordinate substrate. NAD(+) is bound by residues Asn238, 267-272, Glu290, Asn325, 346-348, and Asn394; these read GYGDVG and IGH.

Belongs to the adenosylhomocysteinase family. Requires NAD(+) as cofactor.

The protein localises to the cytoplasm. The enzyme catalyses S-adenosyl-L-homocysteine + H2O = L-homocysteine + adenosine. The protein operates within amino-acid biosynthesis; L-homocysteine biosynthesis; L-homocysteine from S-adenosyl-L-homocysteine: step 1/1. Functionally, may play a key role in the regulation of the intracellular concentration of adenosylhomocysteine. The sequence is that of Adenosylhomocysteinase from Xylella fastidiosa (strain 9a5c).